The chain runs to 210 residues: DNA-directed RNA polymerases I, II, and III subunit RPABC1 (210 aa).

Methionine 1 is subject to N-acetylmethionine. Residue lysine 81 forms a Glycyl lysine isopeptide (Lys-Gly) (interchain with G-Cter in SUMO2) linkage.

This sequence belongs to the archaeal Rpo5/eukaryotic RPB5 RNA polymerase subunit family. In terms of assembly, component of the RNA polymerase I (Pol I), RNA polymerase II (Pol II) and RNA polymerase III (Pol III) complexes consisting of at least 13, 12 and 17 subunits, respectively. Pol I complex consists of a ten-subunit catalytic core composed of POLR1A/RPA1, POLR1B/RPA2, POLR1C/RPAC1, POLR1D/RPAC2, POLR1H/RPA12, POLR2E/RPABC1, POLR2F/RPABC2, POLR2H/RPABC3, POLR2K/RPABC4 and POLR2L/RPABC5; a mobile stalk subunit POLR1F/RPA43 protruding from the core and additional subunits homologous to general transcription factors POLR1E/RPA49 and POLR1G/RPA34. Part of Pol I pre-initiation complex (PIC), in which Pol I core assembles with RRN3 and promoter-bound UTBF and SL1/TIF-IB complex. Pol II complex contains a ten-subunit catalytic core composed of POLR2A/RPB1, POLR2B/RPB2, POLR2C/RPB3, POLR2I/RPB9, POLR2J/RPB11, POLR2E/RPABC1, POLR2F/RPABC2, POLR2H/RPABC3, POLR2K/RPABC4 and POLR2L/RPABC5 and a mobile stalk composed of two subunits POLR2D/RPB4 and POLR2G/RPB7. Part of Pol II(G) complex, in which Pol II core associates with an additional subunit POLR2M; unlike conventional Pol II, Pol II(G) functions as a transcriptional repressor. Part of TBP-based Pol II pre-initiation complex (PIC), in which Pol II core assembles with general transcription factors and other specific initiation factors including GTF2E1, GTF2E2, GTF2F1, GTF2F2, TCEA1, ERCC2, ERCC3, GTF2H2, GTF2H3, GTF2H4, GTF2H5, GTF2A1, GTF2A2, GTF2B and TBP; this large multi-subunit PIC complex mediates DNA unwinding and targets Pol II core to the transcription start site where the first phosphodiester bond forms. In Pol II complex, this subunit is present in 2-fold molar excess over the other subunits. Pol III complex consists of a ten-subunit catalytic core composed of POLR3A/RPC1, POLR3B/RPC2, POLR1C/RPAC1, POLR1D/RPAC2, POLR3K/RPC10, POLR2E/RPABC1, POLR2F/RPABC2, POLR2H/RPABC3, POLR2K/RPABC4 and POLR2L/RPABC5; a mobile stalk composed of two subunits POLR3H/RPC8 and CRCP/RPC9, protruding from the core and functioning primarily in transcription initiation; and additional subunits homologous to general transcription factors of the RNA polymerase II machinery, POLR3C/RPC3-POLR3F/RPC6-POLR3G/RPC7 heterotrimer required for transcription initiation and POLR3D/RPC4-POLR3E/RPC5 heterodimer involved in both transcription initiation and termination. Component of the PAQosome complex which is responsible for the biogenesis of several protein complexes and which consists of R2TP complex members RUVBL1, RUVBL2, RPAP3 and PIH1D1, URI complex members PFDN2, PFDN6, PDRG1, UXT and URI1 as well as ASDURF, POLR2E and DNAAF10/WDR92. Interacts with URI1.

Its subcellular location is the nucleus. The protein resides in the nucleolus. Its function is as follows. DNA-dependent RNA polymerase catalyzes the transcription of DNA into RNA using the four ribonucleoside triphosphates as substrates. Common component of RNA polymerases I, II and III which synthesize ribosomal RNA precursors, mRNA precursors and many functional non-coding RNAs, and small RNAs, such as 5S rRNA and tRNAs, respectively. Pol II is the central component of the basal RNA polymerase II transcription machinery. Pols are composed of mobile elements that move relative to each other. In Pol II, POLR2E/RPABC1 is part of the lower jaw surrounding the central large cleft and thought to grab the incoming DNA template. Seems to be the major component in this process. The polypeptide is DNA-directed RNA polymerases I, II, and III subunit RPABC1 (POLR2E) (Pongo abelii (Sumatran orangutan)).